The sequence spans 137 residues: ATP synthase epsilon chain, chloroplastic (137 aa).

Belongs to the ATPase epsilon chain family. F-type ATPases have 2 components, CF(1) - the catalytic core - and CF(0) - the membrane proton channel. CF(1) has five subunits: alpha(3), beta(3), gamma(1), delta(1), epsilon(1). CF(0) has three main subunits: a, b and c.

It is found in the plastid. Its subcellular location is the chloroplast thylakoid membrane. Its function is as follows. Produces ATP from ADP in the presence of a proton gradient across the membrane. This Pisum sativum (Garden pea) protein is ATP synthase epsilon chain, chloroplastic.